Consider the following 291-residue polypeptide: 4-hydroxy-tetrahydrodipicolinate synthase (291 aa).

T45 is a pyruvate binding site. Y133 functions as the Proton donor/acceptor in the catalytic mechanism. The Schiff-base intermediate with substrate role is filled by K161. I203 contacts pyruvate.

This sequence belongs to the DapA family. Homotetramer; dimer of dimers.

It is found in the cytoplasm. It carries out the reaction L-aspartate 4-semialdehyde + pyruvate = (2S,4S)-4-hydroxy-2,3,4,5-tetrahydrodipicolinate + H2O + H(+). It participates in amino-acid biosynthesis; L-lysine biosynthesis via DAP pathway; (S)-tetrahydrodipicolinate from L-aspartate: step 3/4. Functionally, catalyzes the condensation of (S)-aspartate-beta-semialdehyde [(S)-ASA] and pyruvate to 4-hydroxy-tetrahydrodipicolinate (HTPA). The protein is 4-hydroxy-tetrahydrodipicolinate synthase of Neisseria gonorrhoeae (strain ATCC 700825 / FA 1090).